Reading from the N-terminus, the 87-residue chain is Phosphoribosyl-ATP pyrophosphatase (87 aa).

The protein belongs to the PRA-PH family.

The protein localises to the cytoplasm. It carries out the reaction 1-(5-phospho-beta-D-ribosyl)-ATP + H2O = 1-(5-phospho-beta-D-ribosyl)-5'-AMP + diphosphate + H(+). It functions in the pathway amino-acid biosynthesis; L-histidine biosynthesis; L-histidine from 5-phospho-alpha-D-ribose 1-diphosphate: step 2/9. This is Phosphoribosyl-ATP pyrophosphatase from Pseudarthrobacter chlorophenolicus (strain ATCC 700700 / DSM 12829 / CIP 107037 / JCM 12360 / KCTC 9906 / NCIMB 13794 / A6) (Arthrobacter chlorophenolicus).